A 350-amino-acid chain; its full sequence is Dihydroorotate dehydrogenase (quinone) (350 aa).

FMN is bound by residues 65-69 (AGLDK) and threonine 89. Lysine 69 is a binding site for substrate. 114–118 (NRLGF) provides a ligand contact to substrate. The FMN site is built by asparagine 149 and asparagine 182. Asparagine 182 contacts substrate. The Nucleophile role is filled by serine 185. Asparagine 187 contributes to the substrate binding site. The FMN site is built by lysine 227 and threonine 255. 256-257 (NT) contributes to the substrate binding site. FMN-binding positions include glycine 278, glycine 307, and 328–329 (YT).

This sequence belongs to the dihydroorotate dehydrogenase family. Type 2 subfamily. In terms of assembly, monomer. FMN serves as cofactor.

The protein resides in the cell membrane. It catalyses the reaction (S)-dihydroorotate + a quinone = orotate + a quinol. It participates in pyrimidine metabolism; UMP biosynthesis via de novo pathway; orotate from (S)-dihydroorotate (quinone route): step 1/1. Its function is as follows. Catalyzes the conversion of dihydroorotate to orotate with quinone as electron acceptor. The polypeptide is Dihydroorotate dehydrogenase (quinone) (Polaromonas naphthalenivorans (strain CJ2)).